A 197-amino-acid polypeptide reads, in one-letter code: Translation machinery-associated protein 22 (197 aa).

The 72-residue stretch at 102–173 (VQIKRVERNK…DVKEWLLEVY (72 aa)) folds into the SUI1 domain.

This sequence belongs to the DENR family. In terms of assembly, interacts with the 40S ribosomal subunit.

It localises to the cytoplasm. This chain is Translation machinery-associated protein 22 (tma22), found in Aspergillus niger (strain ATCC MYA-4892 / CBS 513.88 / FGSC A1513).